The following is a 373-amino-acid chain: Indole glucosinolate O-methyltransferase 1 (373 aa).

The S-adenosyl-L-homocysteine site is built by glycine 217, aspartate 240, aspartate 260, methionine 261, and lysine 274. The Proton acceptor role is filled by histidine 278.

This sequence belongs to the class I-like SAM-binding methyltransferase superfamily. Cation-independent O-methyltransferase family. As to quaternary structure, interacts with B'GAMMA.

Its pathway is secondary metabolite biosynthesis. Functionally, involved in indole glucosinolate biosynthesis. Catalyzes methoxylation reactions of the glucosinolate indole ring. Converts the hydroxy intermediates 4-hydroxy-indol-3-yl-methylglucosinolate (4OH-I3M) and 1-hydroxy-indol-3-yl-methylglucosinolate (1OH-I3M) to 4-methoxy-indol-3-yl-methylglucosinolate (4MO-I3M) and 1-methoxy-indol-3-yl-methylglucosinolate (1MO-I3M), respectively. This Arabidopsis thaliana (Mouse-ear cress) protein is Indole glucosinolate O-methyltransferase 1.